The following is a 503-amino-acid chain: Glycerol kinase (503 aa).

T14 contacts ADP. Residues T14, T15, and S16 each contribute to the ATP site. T14 contacts sn-glycerol 3-phosphate. R18 is a binding site for ADP. 4 residues coordinate sn-glycerol 3-phosphate: R84, E85, Y136, and D246. The glycerol site is built by R84, E85, Y136, D246, and Q247. Residues T268 and G311 each contribute to the ADP site. Residues T268, G311, Q315, and G412 each coordinate ATP. Positions 412 and 416 each coordinate ADP.

The protein belongs to the FGGY kinase family. In terms of assembly, homotetramer and homodimer (in equilibrium). Heterodimer with EIIA-Glc. Binds 1 zinc ion per glycerol kinase EIIA-Glc dimer. The zinc ion is important for dimerization.

The catalysed reaction is glycerol + ATP = sn-glycerol 3-phosphate + ADP + H(+). It participates in polyol metabolism; glycerol degradation via glycerol kinase pathway; sn-glycerol 3-phosphate from glycerol: step 1/1. With respect to regulation, activity of this regulatory enzyme is affected by several metabolites. Allosterically and non-competitively inhibited by fructose 1,6-bisphosphate (FBP) and unphosphorylated phosphocarrier protein EIIA-Glc (III-Glc), an integral component of the bacterial phosphotransferase (PTS) system. Functionally, key enzyme in the regulation of glycerol uptake and metabolism. Catalyzes the phosphorylation of glycerol to yield sn-glycerol 3-phosphate. The protein is Glycerol kinase of Klebsiella pneumoniae (strain 342).